Here is a 282-residue protein sequence, read N- to C-terminus: Pantothenate synthetase (282 aa).

26–33 (MGNLHEGH) lines the ATP pocket. The Proton donor role is filled by histidine 33. Residue glutamine 57 participates in (R)-pantoate binding. Residue glutamine 57 coordinates beta-alanine. Position 144 to 147 (144 to 147 (GKKD)) interacts with ATP. Glutamine 150 is a binding site for (R)-pantoate. ATP contacts are provided by residues valine 173 and 181–184 (LSSR).

It belongs to the pantothenate synthetase family. Homodimer.

Its subcellular location is the cytoplasm. The enzyme catalyses (R)-pantoate + beta-alanine + ATP = (R)-pantothenate + AMP + diphosphate + H(+). Its pathway is cofactor biosynthesis; (R)-pantothenate biosynthesis; (R)-pantothenate from (R)-pantoate and beta-alanine: step 1/1. Its function is as follows. Catalyzes the condensation of pantoate with beta-alanine in an ATP-dependent reaction via a pantoyl-adenylate intermediate. The polypeptide is Pantothenate synthetase (Cupriavidus taiwanensis (strain DSM 17343 / BCRC 17206 / CCUG 44338 / CIP 107171 / LMG 19424 / R1) (Ralstonia taiwanensis (strain LMG 19424))).